The following is a 1381-amino-acid chain: Hepatocyte growth factor receptor (1381 aa).

The N-terminal stretch at 1-24 (MKAPAVLAPGILVLLFTLVQRSNG) is a signal peptide. Residues 25–934 (ECKEALTKSE…VQPDQNFTGL (910 aa)) are Extracellular-facing. In terms of domain architecture, Sema spans 27–515 (KEALTKSEMN…TGKKITKIPL (489 aa)). Residue N45 is glycosylated (N-linked (GlcNAc...) asparagine). 4 cysteine pairs are disulfide-bonded: C95/C101, C98/C160, C133/C141, and C172/C175. A glycan (N-linked (GlcNAc...) asparagine) is linked at N106. A glycan (N-linked (GlcNAc...) asparagine) is linked at N149. N202 is a glycosylation site (N-linked (GlcNAc...) asparagine). Cystine bridges form between C298/C363 and C385/C397. N399 is a glycosylation site (N-linked (GlcNAc...) asparagine). 4 disulfides stabilise this stretch: C520/C538, C526/C561, C529/C545, and C541/C551. IPT/TIG domains are found at residues 563–655 (PTIY…FSYV), 657–739 (PIIT…FSYR), and 742–836 (PIVY…LIYV). A glycan (O-linked (Man) threonine) is linked at T582. N-linked (GlcNAc...) asparagine glycosylation is found at N607 and N635. Residues T676 and T761 are each glycosylated (O-linked (Man) threonine). 3 N-linked (GlcNAc...) asparagine glycosylation sites follow: N785, N879, and N930. The helical transmembrane segment at 935 to 955 (VAGVVSISIALLLLLGLFLWL) threads the bilayer. The Cytoplasmic portion of the chain corresponds to 956–1381 (KKKKQIKDLG…QDNTDGEVDT (426 aa)). Phosphoserine is present on S966. At T977 the chain carries Phosphothreonine. A phosphoserine mark is found at S990, S997, and S1000. Position 1003 is a phosphotyrosine (Y1003). The 268-residue stretch at 1078–1345 (VHFNEVIGRG…RISAIFSTFI (268 aa)) folds into the Protein kinase domain. ATP contacts are provided by residues 1084–1092 (IGRGHFGCV) and K1110. D1204 functions as the Proton acceptor in the catalytic mechanism. The segment at 1212-1381 (LDEKFTVKVA…QDNTDGEVDT (170 aa)) is interaction with RANBP9. Y1230 carries the phosphotyrosine modification. Phosphotyrosine; by autocatalysis occurs at positions 1234 and 1235. T1289 is modified (phosphothreonine). The interval 1320–1359 (WHPKAEMRPSFSELVSRISAIFSTFIGEHYVHVNATYVNV) is interaction with MUC20. Residues Y1349 and Y1356 each carry the phosphotyrosine; by autocatalysis modification. Residue Y1365 is modified to Phosphotyrosine.

The protein belongs to the protein kinase superfamily. Tyr protein kinase family. As to quaternary structure, heterodimer made of an alpha chain (50 kDa) and a beta chain (145 kDa) which are disulfide linked. Binds PLXNB1. Interacts when phosphorylated with downstream effectors including STAT3, PIK3R1, SRC, PCLG1, GRB2 and GAB1. Interacts with SPSB1, SPSB2 and SPSB4. Interacts with INPP5D/SHIP1. When phosphorylated at Tyr-1356, interacts with INPPL1/SHIP2. Interacts with RANBP9 and RANBP10, as well as SPSB1, SPSB2, SPSB3 and SPSB4. SPSB1 binding occurs in the presence and in the absence of HGF, however HGF treatment has a positive effect on this interaction. Interacts with MUC20; prevents interaction with GRB2 and suppresses hepatocyte growth factor-induced cell proliferation. Interacts with GRB10. Interacts with PTPN1 and PTPN2. Interacts with HSP90AA1 and HSP90AB1; the interaction suppresses MET kinase activity. Interacts with tensin TNS3. Interacts (when phosphorylated) with tensin TNS4 (via SH2 domain); the interaction increases MET protein stability by inhibiting MET endocytosis and subsequent lysosomal degradation. Autophosphorylated in response to ligand binding on Tyr-1234 and Tyr-1235 in the kinase domain leading to further phosphorylation of Tyr-1349 and Tyr-1356 in the C-terminal multifunctional docking site. Dephosphorylated by PTPRJ at Tyr-1349 and Tyr-1365. Dephosphorylated by PTPN1 and PTPN2. Post-translationally, ubiquitinated. Ubiquitination by CBL regulates the receptor stability and activity through proteasomal degradation. In terms of processing, O-mannosylation of IPT/TIG domains by TMEM260 is required for protein maturation. O-mannosylated residues are composed of single mannose glycans that are not elongated or modified.

The protein localises to the membrane. It catalyses the reaction L-tyrosyl-[protein] + ATP = O-phospho-L-tyrosyl-[protein] + ADP + H(+). Receptor tyrosine kinase that transduces signals from the extracellular matrix into the cytoplasm by binding to hepatocyte growth factor/HGF ligand. Regulates many physiological processes including proliferation, scattering, morphogenesis and survival. Ligand binding at the cell surface induces autophosphorylation of MET on its intracellular domain that provides docking sites for downstream signaling molecules. Following activation by ligand, interacts with the PI3-kinase subunit PIK3R1, PLCG1, SRC, GRB2, STAT3 or the adapter GAB1. Recruitment of these downstream effectors by MET leads to the activation of several signaling cascades including the RAS-ERK, PI3 kinase-AKT, or PLCgamma-PKC. The RAS-ERK activation is associated with the morphogenetic effects while PI3K/AKT coordinates prosurvival effects. During embryonic development, MET signaling plays a role in gastrulation, development and migration of muscles and neuronal precursors, angiogenesis and kidney formation. In adults, participates in wound healing as well as organ regeneration and tissue remodeling. Also promotes differentiation and proliferation of hematopoietic cells. This chain is Hepatocyte growth factor receptor (MET), found in Callithrix jacchus (White-tufted-ear marmoset).